The following is a 455-amino-acid chain: Oxidative stress induced growth inhibitor homolog osgn-1 (455 aa).

Belongs to the OKL38 family. The cofactor is NADPH.

The protein resides in the midbody. In terms of biological role, monooxygenase catalytic activity. Involved in regulation of cytokinesis; promotes rho-1/RhoA activity, probably acting locally at the midbody in late cytokinesis. Monooxygenase activity is required to stabilize structures between primordial germ cells (PGCs), termed intercellular bridges. Dispensable for fertility. The polypeptide is Oxidative stress induced growth inhibitor homolog osgn-1 (Caenorhabditis elegans).